A 316-amino-acid polypeptide reads, in one-letter code: Olfactory receptor 1165 (316 aa).

Over 1–28 the chain is Extracellular; the sequence is MMLDLGNESSVTMFILSGFSEYPHLHAP. Asparagine 7 is a glycosylation site (N-linked (GlcNAc...) asparagine). A helical transmembrane segment spans residues 29 to 50; that stretch reads LFLLFFMIYTVTLIGNLGIIVV. The Cytoplasmic segment spans residues 51 to 61; that stretch reads RKVNPKLHTPM. Residues 62–80 form a helical membrane-spanning segment; that stretch reads YFFLSHLSFLDICYSSVFT. Over 81–99 the chain is Extracellular; the sequence is PKLLEILIVEDRTISFKGC. The cysteines at positions 99 and 181 are disulfide-linked. A helical transmembrane segment spans residues 100–122; sequence MTQFFLICAFVITEMFMLAVMAY. At 123 to 141 the chain is on the cytoplasmic side; sequence DRFVAVCNPLLYTVSMSPK. The helical transmembrane segment at 142–166 threads the bilayer; sequence LCAFLVAGTYMWGVLCSLTITYSLL. Over 167 to 205 the chain is Extracellular; that stretch reads QLSYCGPNIINHFGCEYSAILSLSCSDPTFSQVVCLTIS. The chain crosses the membrane as a helical span at residues 206-228; that stretch reads IFNETCSLLIILASYVFIVVTII. Residues 229–239 are Cytoplasmic-facing; sequence KMPSKGGLQKA. A helical membrane pass occupies residues 240–263; sequence FSTCSSHLTAISIFHGIILLLYCV. The Extracellular portion of the chain corresponds to 264-268; that stretch reads PNSKN. Residues 269-291 form a helical membrane-spanning segment; that stretch reads SWLVVKVATVLFTVMIPMLNPLI. Residues 292 to 316 lie on the Cytoplasmic side of the membrane; it reads YSLRNKDVKGTVSRLMHLKLQAHST.

Belongs to the G-protein coupled receptor 1 family.

It is found in the cell membrane. Functionally, olfactory receptor. This Mus musculus (Mouse) protein is Olfactory receptor 1165.